A 345-amino-acid chain; its full sequence is NADH-ubiquinone oxidoreductase chain 2 (345 aa).

A run of 9 helical transmembrane segments spans residues Met1–Met21, Phe60–Leu80, Pro110–Ile130, Ile149–Gly169, Met179–Ile196, Leu200–Thr222, Thr240–Phe260, Asn274–Leu294, and Thr323–Met343.

This sequence belongs to the complex I subunit 2 family.

The protein resides in the mitochondrion inner membrane. The enzyme catalyses a ubiquinone + NADH + 5 H(+)(in) = a ubiquinol + NAD(+) + 4 H(+)(out). Core subunit of the mitochondrial membrane respiratory chain NADH dehydrogenase (Complex I) that is believed to belong to the minimal assembly required for catalysis. Complex I functions in the transfer of electrons from NADH to the respiratory chain. The immediate electron acceptor for the enzyme is believed to be ubiquinone. The protein is NADH-ubiquinone oxidoreductase chain 2 (MT-ND2) of Varanus melinus (Quince monitor lizard).